The primary structure comprises 101 residues: NAD(P)H-quinone oxidoreductase subunit 4L, chloroplastic (101 aa).

3 consecutive transmembrane segments (helical) span residues Ile-2 to Ile-22, Met-32 to Phe-52, and Ile-61 to Val-81.

It belongs to the complex I subunit 4L family. NDH is composed of at least 16 different subunits, 5 of which are encoded in the nucleus.

Its subcellular location is the plastid. The protein localises to the chloroplast thylakoid membrane. The enzyme catalyses a plastoquinone + NADH + (n+1) H(+)(in) = a plastoquinol + NAD(+) + n H(+)(out). It catalyses the reaction a plastoquinone + NADPH + (n+1) H(+)(in) = a plastoquinol + NADP(+) + n H(+)(out). In terms of biological role, NDH shuttles electrons from NAD(P)H:plastoquinone, via FMN and iron-sulfur (Fe-S) centers, to quinones in the photosynthetic chain and possibly in a chloroplast respiratory chain. The immediate electron acceptor for the enzyme in this species is believed to be plastoquinone. Couples the redox reaction to proton translocation, and thus conserves the redox energy in a proton gradient. This chain is NAD(P)H-quinone oxidoreductase subunit 4L, chloroplastic, found in Phaseolus vulgaris (Kidney bean).